The primary structure comprises 1168 residues: Transcription-repair-coupling factor (1168 aa).

Positions 633-794 constitute a Helicase ATP-binding domain; that stretch reads DMQKSRPMDR…MLGVRDLSVI (162 aa). Residue 646–653 coordinates ATP; sequence GDVGYGKT. A DEEQ box motif is present at residues 747–750; the sequence is DEEQ. The region spanning 808–969 is the Helicase C-terminal domain; it reads VLEQNMSFIK…GFKIAMRDLN (162 aa).

It in the N-terminal section; belongs to the UvrB family. This sequence in the C-terminal section; belongs to the helicase family. RecG subfamily.

It localises to the cytoplasm. Its function is as follows. Couples transcription and DNA repair by recognizing RNA polymerase (RNAP) stalled at DNA lesions. Mediates ATP-dependent release of RNAP and its truncated transcript from the DNA, and recruitment of nucleotide excision repair machinery to the damaged site. The chain is Transcription-repair-coupling factor from Staphylococcus aureus (strain USA300).